A 338-amino-acid polypeptide reads, in one-letter code: Ketol-acid reductoisomerase (NADP(+)) (338 aa).

Residues 3–183 form the KARI N-terminal Rossmann domain; that stretch reads IDVFYDDDAD…GGARAGVIPT (181 aa). NADP(+) is bound by residues 26–29, Arg49, Ser52, Ser54, and 84–87; these read YGSQ and DTSQ. The active site involves His109. Gly135 serves as a coordination point for NADP(+). In terms of domain architecture, KARI C-terminal knotted spans 184-329; sequence TFEAETVTDL…AKLRDLMSWV (146 aa). Positions 192, 196, 228, and 232 each coordinate Mg(2+). Ser253 serves as a coordination point for substrate.

Belongs to the ketol-acid reductoisomerase family. It depends on Mg(2+) as a cofactor.

The enzyme catalyses (2R)-2,3-dihydroxy-3-methylbutanoate + NADP(+) = (2S)-2-acetolactate + NADPH + H(+). It catalyses the reaction (2R,3R)-2,3-dihydroxy-3-methylpentanoate + NADP(+) = (S)-2-ethyl-2-hydroxy-3-oxobutanoate + NADPH + H(+). It participates in amino-acid biosynthesis; L-isoleucine biosynthesis; L-isoleucine from 2-oxobutanoate: step 2/4. The protein operates within amino-acid biosynthesis; L-valine biosynthesis; L-valine from pyruvate: step 2/4. Involved in the biosynthesis of branched-chain amino acids (BCAA). Catalyzes an alkyl-migration followed by a ketol-acid reduction of (S)-2-acetolactate (S2AL) to yield (R)-2,3-dihydroxy-isovalerate. In the isomerase reaction, S2AL is rearranged via a Mg-dependent methyl migration to produce 3-hydroxy-3-methyl-2-ketobutyrate (HMKB). In the reductase reaction, this 2-ketoacid undergoes a metal-dependent reduction by NADPH to yield (R)-2,3-dihydroxy-isovalerate. In Corynebacterium jeikeium (strain K411), this protein is Ketol-acid reductoisomerase (NADP(+)).